Here is a 348-residue protein sequence, read N- to C-terminus: Dihydroorotase (348 aa).

Residues H17 and H19 each coordinate Zn(2+). Residues 19 to 21 (HLR) and N45 each bind substrate. 3 residues coordinate Zn(2+): K103, H140, and H178. K103 carries the N6-carboxylysine modification. H140 is a binding site for substrate. Residue L223 participates in substrate binding. Position 251 (D251) interacts with Zn(2+). Residue D251 is part of the active site. Substrate is bound by residues H255 and A267.

Belongs to the metallo-dependent hydrolases superfamily. DHOase family. Class II DHOase subfamily. Homodimer. The cofactor is Zn(2+).

The enzyme catalyses (S)-dihydroorotate + H2O = N-carbamoyl-L-aspartate + H(+). Its pathway is pyrimidine metabolism; UMP biosynthesis via de novo pathway; (S)-dihydroorotate from bicarbonate: step 3/3. Functionally, catalyzes the reversible cyclization of carbamoyl aspartate to dihydroorotate. The polypeptide is Dihydroorotase (Shigella flexneri serotype 5b (strain 8401)).